The chain runs to 188 residues: Heterodisulfide reductase subunit C-like protein (188 aa).

4Fe-4S ferredoxin-type domains lie at 34–64 and 78–109; these read KELG…FEWY and DELL…FEVM. [4Fe-4S] cluster contacts are provided by C44, C47, C50, C54, C89, C92, C95, and C99.

It belongs to the HdrC family. As to quaternary structure, the heterodisulfide reductase is composed of three subunits; HdlA, HdlB and HdlC. It forms a complex with the F420-non-reducing hydrogenase (Mvh), which provides the reducing equivalents to the heterodisulfide reductase.

Its subcellular location is the cytoplasm. Its function is as follows. Has oxidoreductase activity. The Hdl and Mvh subunits may together mediate electron transfer from hydrogen to an unidentified electron acceptor on the cytoplasmic side of the membrane. This is Heterodisulfide reductase subunit C-like protein (hdlC) from Archaeoglobus profundus (strain DSM 5631 / JCM 9629 / NBRC 100127 / Av18).